Consider the following 376-residue polypeptide: Erythronate-4-phosphate dehydrogenase (376 aa).

Positions 45 and 67 each coordinate substrate. Asp147 is a binding site for NAD(+). Arg209 is a catalytic residue. Asp233 contributes to the NAD(+) binding site. Glu238 is an active-site residue. The active-site Proton donor is the His255. An NAD(+)-binding site is contributed by Gly258. Residue Tyr259 coordinates substrate.

The protein belongs to the D-isomer specific 2-hydroxyacid dehydrogenase family. PdxB subfamily. In terms of assembly, homodimer.

The protein resides in the cytoplasm. It catalyses the reaction 4-phospho-D-erythronate + NAD(+) = (R)-3-hydroxy-2-oxo-4-phosphooxybutanoate + NADH + H(+). It functions in the pathway cofactor biosynthesis; pyridoxine 5'-phosphate biosynthesis; pyridoxine 5'-phosphate from D-erythrose 4-phosphate: step 2/5. Its function is as follows. Catalyzes the oxidation of erythronate-4-phosphate to 3-hydroxy-2-oxo-4-phosphonooxybutanoate. In Shewanella baltica (strain OS223), this protein is Erythronate-4-phosphate dehydrogenase.